We begin with the raw amino-acid sequence, 110 residues long: Inner kinetochore subunit mhf1 (110 aa).

It belongs to the TAF9 family. CENP-S/MHF1 subfamily. In terms of assembly, the MHF histone-fold complex is a heterotetramer of 2 mhf1-mhf2 heterodimers. Component of the inner kinetochore constitutive centromere-associated network (CCAN) (also known as central kinetochore Sim4 complex in fission yeast), which is composed of at least cnl2, cnp3, cnp20, fta1, fta2, fta3, fta4, fta6, fta7, mal2, mhf1, mhf2, mis6, mis15, mis17, sim4 and wip1.

The protein resides in the nucleus. Functionally, component of a FANCM-MHF complex that promotes gene conversion at blocked replication forks, probably by reversal of the stalled fork. FANCM-MHF promotes non-crossover recombination. The protein is Inner kinetochore subunit mhf1 of Schizosaccharomyces pombe (strain 972 / ATCC 24843) (Fission yeast).